We begin with the raw amino-acid sequence, 174 residues long: Ribosome maturation factor RimM (174 aa).

In terms of domain architecture, PRC barrel spans 95–174 (DDEFYWRDLI…QIQVEWPSDF (80 aa)).

Belongs to the RimM family. In terms of assembly, binds ribosomal protein uS19.

Its subcellular location is the cytoplasm. An accessory protein needed during the final step in the assembly of 30S ribosomal subunit, possibly for assembly of the head region. Essential for efficient processing of 16S rRNA. May be needed both before and after RbfA during the maturation of 16S rRNA. It has affinity for free ribosomal 30S subunits but not for 70S ribosomes. This chain is Ribosome maturation factor RimM, found in Idiomarina loihiensis (strain ATCC BAA-735 / DSM 15497 / L2-TR).